The primary structure comprises 608 residues: Pentatricopeptide repeat-containing protein 1, apicoplast (608 aa).

PPR repeat units lie at residues 165 to 199, 200 to 230, 236 to 270, 336 to 370, 372 to 402, 410 to 445, and 446 to 480; these read TTLA…NIKP, DLVS…MIES, NYEI…PFVE, QYSE…GKYM, SIFV…LKND, NVNI…LLTP, and NNLS…KLLN.

Belongs to the PPR family. P subfamily. As to quaternary structure, homodimer.

Its subcellular location is the plastid. It is found in the apicoplast. Its function is as follows. Binds to apicoplast RNA transcripts, preferentially to the motif UUAU, and protects RNA transcripts from degradation by ribonuclease. The sequence is that of Pentatricopeptide repeat-containing protein 1, apicoplast from Plasmodium falciparum (isolate 3D7).